The chain runs to 531 residues: Tubulin-folding cofactor E (531 aa).

Residues 32 to 76 form the CAP-Gly domain; that stretch reads GDVEGYSGTWIGVDWDQDGDGKHNGSVNGVFYFNGRSQSSASFVR. 9 LRR repeats span residues 84-109, 159-183, 185-213, 233-256, 260-284, 285-308, 318-342, 344-366, and 474-497; these read ITLL…MYVL, LPNL…ALCE, LPAL…NIRV, LPGI…SSSD, FNSL…KLSQ, LPCL…VNGT, FPSL…ALNG, PQLV…GVPR, and VGKL…LFLQ.

The protein belongs to the TBCE family. As to quaternary structure, supercomplex made of cofactors A to E. Cofactors A and D function by capturing and stabilizing tubulin in a quasi-native conformation. Cofactor E binds to the cofactor D-tubulin complex; interaction with cofactor C then causes the release of tubulin polypeptides that are committed to the native state.

The protein localises to the cytoplasm. In terms of biological role, essential tubulin-folding protein involved in the tubulin folding pathway. Not essential for cell viability. Probably involved in the binding of alpha-tubulin in the multimeric supercomplex. This is Tubulin-folding cofactor E (TFCE) from Arabidopsis thaliana (Mouse-ear cress).